The following is a 516-amino-acid chain: MRQDENNSEEEFVEIDPTGRYGRYKEVLGKGAFKEVYRAFDQLEGIEVAWNQVKLDDKFCSSEDLDRLYSEVHLLKTLKHKSIIKFYTSWIDHQHMTINLITEVFTSGNLRQYRKKHKCVDLRALKKWSRQILEGLVYLHSHDPPVIHRDLKCDNIFINGNQGEVKIGDLGLAAILHRARSAHSVIGTPEFMAPELYEEDYNVLVDIYAFGMCLLELVTFEYPYSECTNAAQIYRKVTSGIKPAALLNVTDPQVRAFIEKCIAKVSQRLSAKELLDDPFLKCYKENTENVSSHKENGYNGNGIVDKLSDSEVGLLTVEGQRKDLNTIFLKLRITDSKGQIRNIHFPFNIETDTSFSVAIEMVEELDLTDDQDISTIAKMIDTEIHSHIPDWTPSRLIGDDSAVQKCLSSPETLHLDRFPSGRKFWSSPKAGAGDSRSPFAPRSNSKLSSAQGPINQEVGVIVEKLESLLRKQREEIEEMQRDQERIVTEFLKEFPPEICEEALVRLQVKDSDNLLC.

The Protein kinase domain maps to 22 to 280 (GRYKEVLGKG…AKELLDDPFL (259 aa)). ATP contacts are provided by residues 102 to 105 (TEVF) and Lys-152. Residue Asp-169 is the Proton acceptor of the active site. The disordered stretch occupies residues 426 to 451 (SSPKAGAGDSRSPFAPRSNSKLSSAQ). Residues 442–451 (RSNSKLSSAQ) are compositionally biased toward polar residues. A coiled-coil region spans residues 457 to 490 (EVGVIVEKLESLLRKQREEIEEMQRDQERIVTEF).

The protein belongs to the protein kinase superfamily. Ser/Thr protein kinase family. WNK subfamily.

The catalysed reaction is L-seryl-[protein] + ATP = O-phospho-L-seryl-[protein] + ADP + H(+). The enzyme catalyses L-threonyl-[protein] + ATP = O-phospho-L-threonyl-[protein] + ADP + H(+). Functionally, may regulate flowering time by modulating the photoperiod pathway. This Arabidopsis thaliana (Mouse-ear cress) protein is Probable serine/threonine-protein kinase WNK3 (WNK3).